The sequence spans 120 residues: Aspartate 1-decarboxylase (120 aa).

The active-site Schiff-base intermediate with substrate; via pyruvic acid is the Ser-25. Ser-25 carries the post-translational modification Pyruvic acid (Ser). Residue Thr-57 participates in substrate binding. The active-site Proton donor is the Tyr-58. 73-75 lines the substrate pocket; that stretch reads GAA.

Belongs to the PanD family. As to quaternary structure, heterooctamer of four alpha and four beta subunits. Pyruvate serves as cofactor. Post-translationally, is synthesized initially as an inactive proenzyme, which is activated by self-cleavage at a specific serine bond to produce a beta-subunit with a hydroxyl group at its C-terminus and an alpha-subunit with a pyruvoyl group at its N-terminus.

The protein resides in the cytoplasm. The enzyme catalyses L-aspartate + H(+) = beta-alanine + CO2. Its pathway is cofactor biosynthesis; (R)-pantothenate biosynthesis; beta-alanine from L-aspartate: step 1/1. Its function is as follows. Catalyzes the pyruvoyl-dependent decarboxylation of aspartate to produce beta-alanine. This is Aspartate 1-decarboxylase from Ralstonia pickettii (strain 12J).